Consider the following 87-residue polypeptide: Large ribosomal subunit protein bL31B (87 aa).

This sequence belongs to the bacterial ribosomal protein bL31 family. Type B subfamily. Part of the 50S ribosomal subunit.

In Escherichia coli O8 (strain IAI1), this protein is Large ribosomal subunit protein bL31B.